The chain runs to 601 residues: Glutamine--fructose-6-phosphate aminotransferase [isomerizing] (601 aa).

The active-site Nucleophile; for GATase activity is the Cys2. A Glutamine amidotransferase type-2 domain is found at 2 to 218 (CGIVGYIGYD…DHEIVIVKKD (217 aa)). SIS domains follow at residues 284–423 (IIND…EHGR) and 453–591 (IATD…VDKP). Residue Lys596 is the For Fru-6P isomerization activity of the active site.

Homodimer.

Its subcellular location is the cytoplasm. The enzyme catalyses D-fructose 6-phosphate + L-glutamine = D-glucosamine 6-phosphate + L-glutamate. Functionally, catalyzes the first step in hexosamine metabolism, converting fructose-6P into glucosamine-6P using glutamine as a nitrogen source. This is Glutamine--fructose-6-phosphate aminotransferase [isomerizing] from Staphylococcus aureus (strain Mu50 / ATCC 700699).